A 98-amino-acid polypeptide reads, in one-letter code: MLLTMEDVEHVARLARLRLSPDELEHMRDQLSKILDHFQMLQQIDVSAVPPTAQVTDLINVMREDEVRPSLPREQALANAPEQQDGMFRVRAIFEEAS.

Belongs to the GatC family. In terms of assembly, heterotrimer of A, B and C subunits.

It carries out the reaction L-glutamyl-tRNA(Gln) + L-glutamine + ATP + H2O = L-glutaminyl-tRNA(Gln) + L-glutamate + ADP + phosphate + H(+). The catalysed reaction is L-aspartyl-tRNA(Asn) + L-glutamine + ATP + H2O = L-asparaginyl-tRNA(Asn) + L-glutamate + ADP + phosphate + 2 H(+). Its function is as follows. Allows the formation of correctly charged Asn-tRNA(Asn) or Gln-tRNA(Gln) through the transamidation of misacylated Asp-tRNA(Asn) or Glu-tRNA(Gln) in organisms which lack either or both of asparaginyl-tRNA or glutaminyl-tRNA synthetases. The reaction takes place in the presence of glutamine and ATP through an activated phospho-Asp-tRNA(Asn) or phospho-Glu-tRNA(Gln). The protein is Aspartyl/glutamyl-tRNA(Asn/Gln) amidotransferase subunit C of Roseiflexus castenholzii (strain DSM 13941 / HLO8).